The sequence spans 145 residues: Large-conductance mechanosensitive channel (145 aa).

2 helical membrane-spanning segments follow: residues 14–34 and 81–101; these read VIDLAIGIIIGGAFGKIVDSL and GIFISTIVDFLIMAFVVFLMV.

It belongs to the MscL family. Homopentamer.

Its subcellular location is the cell inner membrane. Functionally, channel that opens in response to stretch forces in the membrane lipid bilayer. May participate in the regulation of osmotic pressure changes within the cell. This chain is Large-conductance mechanosensitive channel, found in Pelobacter propionicus (strain DSM 2379 / NBRC 103807 / OttBd1).